Consider the following 32-residue polypeptide: Basic phospholipase A2 (32 aa).

The Ca(2+) site is built by tyrosine 26, glycine 28, and glycine 30.

It belongs to the phospholipase A2 family. Group II subfamily. Requires Ca(2+) as cofactor. Expressed by the venom gland.

It localises to the secreted. The catalysed reaction is a 1,2-diacyl-sn-glycero-3-phosphocholine + H2O = a 1-acyl-sn-glycero-3-phosphocholine + a fatty acid + H(+). In terms of biological role, snake venom phospholipase A2 (PLA2) that inhibits neuromuscular transmission by blocking acetylcholine release from the nerve termini. PLA2 catalyzes the calcium-dependent hydrolysis of the 2-acyl groups in 3-sn-phosphoglycerides. The protein is Basic phospholipase A2 of Gloydius halys (Chinese water mocassin).